The sequence spans 700 residues: Elongation factor G (700 aa).

One can recognise a tr-type G domain in the interval 8 to 290; the sequence is ERYRNIGISA…AVIDYLPAPT (283 aa). GTP is bound by residues 17–24, 88–92, and 142–145; these read AHIDAGKT, DTPGH, and NKMD.

The protein belongs to the TRAFAC class translation factor GTPase superfamily. Classic translation factor GTPase family. EF-G/EF-2 subfamily.

The protein resides in the cytoplasm. Its function is as follows. Catalyzes the GTP-dependent ribosomal translocation step during translation elongation. During this step, the ribosome changes from the pre-translocational (PRE) to the post-translocational (POST) state as the newly formed A-site-bound peptidyl-tRNA and P-site-bound deacylated tRNA move to the P and E sites, respectively. Catalyzes the coordinated movement of the two tRNA molecules, the mRNA and conformational changes in the ribosome. The chain is Elongation factor G (fusA) from Pasteurella multocida (strain Pm70).